Reading from the N-terminus, the 443-residue chain is Light-independent protochlorophyllide reductase subunit N (443 aa).

Positions 15, 40, and 99 each coordinate [4Fe-4S] cluster.

The protein belongs to the BchN/ChlN family. In terms of assembly, protochlorophyllide reductase is composed of three subunits; BchL, BchN and BchB. Forms a heterotetramer of two BchB and two BchN subunits. Requires [4Fe-4S] cluster as cofactor.

It catalyses the reaction chlorophyllide a + oxidized 2[4Fe-4S]-[ferredoxin] + 2 ADP + 2 phosphate = protochlorophyllide a + reduced 2[4Fe-4S]-[ferredoxin] + 2 ATP + 2 H2O. The protein operates within porphyrin-containing compound metabolism; bacteriochlorophyll biosynthesis (light-independent). In terms of biological role, component of the dark-operative protochlorophyllide reductase (DPOR) that uses Mg-ATP and reduced ferredoxin to reduce ring D of protochlorophyllide (Pchlide) to form chlorophyllide a (Chlide). This reaction is light-independent. The NB-protein (BchN-BchB) is the catalytic component of the complex. The chain is Light-independent protochlorophyllide reductase subunit N from Heliobacterium modesticaldum (strain ATCC 51547 / Ice1).